Here is a 312-residue protein sequence, read N- to C-terminus: Methionyl-tRNA formyltransferase (312 aa).

A (6S)-5,6,7,8-tetrahydrofolate-binding site is contributed by 111-114; sequence SLLP.

This sequence belongs to the Fmt family.

It carries out the reaction L-methionyl-tRNA(fMet) + (6R)-10-formyltetrahydrofolate = N-formyl-L-methionyl-tRNA(fMet) + (6S)-5,6,7,8-tetrahydrofolate + H(+). Its function is as follows. Attaches a formyl group to the free amino group of methionyl-tRNA(fMet). The formyl group appears to play a dual role in the initiator identity of N-formylmethionyl-tRNA by promoting its recognition by IF2 and preventing the misappropriation of this tRNA by the elongation apparatus. This Rhodopseudomonas palustris (strain HaA2) protein is Methionyl-tRNA formyltransferase.